The primary structure comprises 254 residues: Alcohol dehydrogenase (254 aa).

NAD(+) is bound at residue 10 to 33 (FVAGLGGIGLDTSREIVKSGPKNL). Ser138 serves as a coordination point for substrate. Residue Tyr151 is the Proton acceptor of the active site.

The protein belongs to the short-chain dehydrogenases/reductases (SDR) family. As to quaternary structure, homodimer.

The enzyme catalyses a primary alcohol + NAD(+) = an aldehyde + NADH + H(+). It carries out the reaction a secondary alcohol + NAD(+) = a ketone + NADH + H(+). This is Alcohol dehydrogenase (Adh) from Drosophila hawaiiensis (Fruit fly).